Consider the following 471-residue polypeptide: UDP-N-acetylmuramate--L-alanine ligase (471 aa).

114 to 120 is an ATP binding site; that stretch reads GTHGKTT.

Belongs to the MurCDEF family.

The protein resides in the cytoplasm. It catalyses the reaction UDP-N-acetyl-alpha-D-muramate + L-alanine + ATP = UDP-N-acetyl-alpha-D-muramoyl-L-alanine + ADP + phosphate + H(+). It participates in cell wall biogenesis; peptidoglycan biosynthesis. Cell wall formation. This Brucella abortus (strain S19) protein is UDP-N-acetylmuramate--L-alanine ligase.